The sequence spans 445 residues: Arginine/agmatine antiporter (445 aa).

Residues 1–12 (MSSDADAHKVGL) are Cytoplasmic-facing. Residues 13-24 (IPVTLMVSGNIM) traverse the membrane as a helical segment. Residues Ile23, Ser26, and Gly27 each coordinate L-arginine. Positions 25–27 (GSG) match the Helix-breaking GSG motif TM1 motif. Residues 25–42 (GSGVFLLPANLASTGGIA) are Periplasmic-facing. Residues 43–61 (IYGWLVTIIGALGLSMVYA) traverse the membrane as a helical segment. Topologically, residues 62-86 (KMSFLDPSPGGSYAYARRCFGPFLG) are cytoplasmic. Residues 87–112 (YQTNVLYWLACWIGNIAMVVIGVGYL) form a helical membrane-spanning segment. L-arginine is bound by residues Ala96, Cys97, and Asn101. Over 113–124 (SYFFPILKDPLV) the chain is Periplasmic. Residues 125–142 (LTITCVVVLWIFVLLNIV) form a helical membrane-spanning segment. Residue Gly143 is a topological domain, cytoplasmic. A helical transmembrane segment spans residues 144-171 (PKMITRVQAVATVLALIPIVGIAVFGWF). Over 172–194 (WFRGETYMAAWNVSGLGTFGAIQ) the chain is Periplasmic. The helical transmembrane segment at 195–207 (STLNVTLWSFIGV) threads the bilayer. Residues Trp202 and Ile205 each coordinate L-arginine. The short motif at 206-210 (GVESA) is the Helix-breaking GVESA motif TM6 element. The Cytoplasmic portion of the chain corresponds to 208-226 (ESASVAAGVVKNPKRNVPI). A helical membrane pass occupies residues 227 to 247 (ATIGGVLIAAVCYVLSTTAIM). At 248 to 277 (GMIPNAALRVSASPFGDAARMALGDTAGAI) the chain is on the periplasmic side. The chain crosses the membrane as a helical span at residues 278-301 (VSFCAAAGCLGSLGGWTLLAGQTA). Trp293 contacts L-arginine. Topologically, residues 302–323 (KAAADDGLFPPIFARVNKAGTP) are cytoplasmic. The helical transmembrane segment at 324–340 (VAGLIIVGILMTIFQLS) threads the bilayer. At 341-352 (SISPNATKEFGL) the chain is on the periplasmic side. A helical transmembrane segment spans residues 353 to 370 (VSSVSVIFTLVPYLYTCA). Ser357 contributes to the L-arginine binding site. Residues 371 to 388 (ALLLLGHGHFGKARPAYL) are Cytoplasmic-facing. A helical membrane pass occupies residues 389–404 (AVTTIAFLYCIWAVVG). Topologically, residues 405–407 (SGA) are periplasmic. Residues 408 to 426 (KEVMWSFVTLMVITAMYAL) traverse the membrane as a helical segment. Topologically, residues 427–445 (NYNRLHKNPYPLDAPISKD) are cytoplasmic.

The protein belongs to the amino acid-polyamine-organocation (APC) superfamily. Basic amino acid/polyamine antiporter (APA) (TC 2.A.3.2) family. Homodimer;each subunit has its own individual transport capacity.

It is found in the cell inner membrane. The catalysed reaction is agmatine(in) + L-arginine(out) = agmatine(out) + L-arginine(in). Functionally, major component of the acid-resistance (AR) system allowing enteric pathogens to survive the acidic environment in the stomach. Exchanges extracellular arginine for its intracellular decarboxylation product agmatine (Agm) thereby expelling intracellular protons. Probably undergoes several conformational states in order to translocate the substrate across the membrane; keeps the substrate accessible to only 1 side of the membrane at a time by opening and closing 3 membrane-internal gates. The protein is Arginine/agmatine antiporter (adiC) of Escherichia coli O157:H7.